Reading from the N-terminus, the 313-residue chain is Protein-methionine-sulfoxide reductase catalytic subunit MsrP (313 aa).

The tat-type signal signal peptide spans 1 to 44; it reads MARWRPDMAEREATPEALYLRRRDFLALGAAGAVGLLLPRGARA. Mo-molybdopterin is bound by residues asparagine 76, 79-80, cysteine 134, threonine 169, asparagine 217, arginine 222, and 233-235; these read YE and GAK.

Belongs to the MsrP family. In terms of assembly, heterodimer of a catalytic subunit (MsrP) and a heme-binding subunit (MsrQ). It depends on Mo-molybdopterin as a cofactor. In terms of processing, predicted to be exported by the Tat system. The position of the signal peptide cleavage has not been experimentally proven.

Its subcellular location is the periplasm. The catalysed reaction is L-methionyl-[protein] + a quinone + H2O = L-methionyl-(S)-S-oxide-[protein] + a quinol. The enzyme catalyses L-methionyl-[protein] + a quinone + H2O = L-methionyl-(R)-S-oxide-[protein] + a quinol. In terms of biological role, part of the MsrPQ system that repairs oxidized periplasmic proteins containing methionine sulfoxide residues (Met-O), using respiratory chain electrons. Thus protects these proteins from oxidative-stress damage caused by reactive species of oxygen and chlorine generated by the host defense mechanisms. MsrPQ is essential for the maintenance of envelope integrity under bleach stress, rescuing a wide series of structurally unrelated periplasmic proteins from methionine oxidation. The catalytic subunit MsrP is non-stereospecific, being able to reduce both (R-) and (S-) diastereoisomers of methionine sulfoxide. The polypeptide is Protein-methionine-sulfoxide reductase catalytic subunit MsrP (Anaeromyxobacter dehalogenans (strain 2CP-1 / ATCC BAA-258)).